Reading from the N-terminus, the 337-residue chain is Palmitoyltransferase ZDHHC15 (337 aa).

Topologically, residues 1 to 20 (MRRGWKMALSGGLRCCRRVL) are cytoplasmic. The helical transmembrane segment at 21-41 (SWVPVLVIVLVVLWSYYAYVF) threads the bilayer. At 42 to 56 (ELCLVTVLSPAEKVI) the chain is on the lumenal side. Residues 57-77 (YLILYHAIFVFFAWTYWKSIF) traverse the membrane as a helical segment. Residues 78 to 172 (TLPQQPNQKF…NNCIGFSNYK (95 aa)) are Cytoplasmic-facing. Positions 129 to 179 (RFCDRCHLIKPDRCHHCSVCAMCVLKMDHHCPWVNNCIGFSNYKFFLQFLA) constitute a DHHC domain. Zn(2+)-binding residues include Cys-131, Cys-134, His-144, Cys-145, Cys-148, Cys-151, and His-158. Cys-159 acts as the S-palmitoyl cysteine intermediate in catalysis. Position 165 (Cys-165) interacts with Zn(2+). Residues 173 to 193 (FFLQFLAYSVLYCLYIATTVF) traverse the membrane as a helical segment. The Lumenal segment spans residues 194–210 (SYFIKYWRGELPSVRSK). The chain crosses the membrane as a helical span at residues 211–234 (FHVLFLLFVACMFFVSLVILFGYH). The Cytoplasmic portion of the chain corresponds to 235–337 (CWLVSRNKTT…SSSLAVESET (103 aa)). Positions 293 to 337 (HSFPMRSMNESQNPLLANEEPWEDNEDDSRDYPEGSSSLAVESET) are disordered. The span at 312–321 (EPWEDNEDDS) shows a compositional bias: acidic residues. Positions 327 to 337 (GSSSLAVESET) are enriched in polar residues.

This sequence belongs to the DHHC palmitoyltransferase family. Post-translationally, autopalmitoylated (in vitro). Expressed mainly in brain.

It is found in the golgi apparatus membrane. The protein resides in the postsynaptic density. It catalyses the reaction L-cysteinyl-[protein] + hexadecanoyl-CoA = S-hexadecanoyl-L-cysteinyl-[protein] + CoA. The catalysed reaction is L-cysteinyl-[protein] + tetradecanoyl-CoA = S-tetradecanoyl-L-cysteinyl-[protein] + CoA. It carries out the reaction L-cysteinyl-[protein] + octadecanoyl-CoA = S-octadecanoyl-L-cysteinyl-[protein] + CoA. With respect to regulation, inhibited by 2-bromopalmitate. Its function is as follows. Palmitoyltransferase that catalyzes the addition of palmitate onto various protein substrates. Has no stringent fatty acid selectivity and in addition to palmitate can also transfer onto target proteins myristate from tetradecanoyl-CoA and stearate from octadecanoyl-CoA. Palmitoylates IGF2R and SORT1, promoting their partitioning to an endosomal membrane subdomain where they can interact with the retromer cargo-selective complex. Thereby, regulates retrograde transport from endosomes to the Golgi apparatus of these lysosomal sorting receptors and plays a role in trafficking of lysosomal proteins. In the nervous system, catalyzes the palmitoylation of DLG4/PSD95 and regulates its synaptic clustering and function in synaptogenesis. Could be involved in the differentiation of dopaminergic neurons and the development of the diencephalon. Could also catalyze the palmitoylation of GAP43. Could also palmitoylate DNAJC5 and regulate its localization to the Golgi membrane. Could also palmitoylate FYN as shown in vitro. May palmitoylate CALHM3 subunit of gustatory voltage-gated ion channels and modulate channel gating and kinetics. This is Palmitoyltransferase ZDHHC15 from Mus musculus (Mouse).